The sequence spans 450 residues: 3-phosphoshikimate 1-carboxyvinyltransferase (450 aa).

3-phosphoshikimate is bound by residues K28, S29, and R33. Phosphoenolpyruvate is bound at residue K28. Residues G100 and R128 each coordinate phosphoenolpyruvate. The 3-phosphoshikimate site is built by S173, Q175, D326, and K353. A phosphoenolpyruvate-binding site is contributed by Q175. D326 acts as the Proton acceptor in catalysis. 2 residues coordinate phosphoenolpyruvate: R357 and R402.

This sequence belongs to the EPSP synthase family. Monomer.

The protein localises to the cytoplasm. It catalyses the reaction 3-phosphoshikimate + phosphoenolpyruvate = 5-O-(1-carboxyvinyl)-3-phosphoshikimate + phosphate. It functions in the pathway metabolic intermediate biosynthesis; chorismate biosynthesis; chorismate from D-erythrose 4-phosphate and phosphoenolpyruvate: step 6/7. Its function is as follows. Catalyzes the transfer of the enolpyruvyl moiety of phosphoenolpyruvate (PEP) to the 5-hydroxyl of shikimate-3-phosphate (S3P) to produce enolpyruvyl shikimate-3-phosphate and inorganic phosphate. This chain is 3-phosphoshikimate 1-carboxyvinyltransferase, found in Brucella melitensis biotype 1 (strain ATCC 23456 / CCUG 17765 / NCTC 10094 / 16M).